Here is a 273-residue protein sequence, read N- to C-terminus: MSRIAERFRACRSAGRTALIPYITGGDPSPDDTVRLMHALVAGGADVIEIGVPFSDPMADGPVIQAACARALAAGTTPARLFEVVRRFREEDPDTPVVFMGYANILEAAGYRAFVRDAAAAGVDGLLTVDLPPEEAGALADEARVQGVDLIYLVAPNTSAERVERVCSVAGGFVYAVALKGVTGSADLDAGLVGQQVAGIRRVTDLPVAVGFGVRDPQSAAALAPCADGVIVGSALVRMIGEHGAAADLPERLRDAVLALRRAMDDTTTGGDS.

Active-site proton acceptor residues include glutamate 49 and aspartate 60.

Belongs to the TrpA family. In terms of assembly, tetramer of two alpha and two beta chains.

It carries out the reaction (1S,2R)-1-C-(indol-3-yl)glycerol 3-phosphate + L-serine = D-glyceraldehyde 3-phosphate + L-tryptophan + H2O. Its pathway is amino-acid biosynthesis; L-tryptophan biosynthesis; L-tryptophan from chorismate: step 5/5. Its function is as follows. The alpha subunit is responsible for the aldol cleavage of indoleglycerol phosphate to indole and glyceraldehyde 3-phosphate. The chain is Tryptophan synthase alpha chain from Halorhodospira halophila (strain DSM 244 / SL1) (Ectothiorhodospira halophila (strain DSM 244 / SL1)).